Here is a 280-residue protein sequence, read N- to C-terminus: MKLLKILSLVCLSISIGACAEHSMSRAKTSTIPQVNNSIIDQNVQALFNEISADAVFVTYDGQNIKKYGTHLDRAKTAYIPASTFKIANALIGLENHKATSTEIFKWDGKPRFFKAWDKDFTLGEAMQASTVPVYQELARRIGPSLMQSELQRIGYGNMQIGTEVDQFWLKGPLTITPIQEVKFVYDLAQGQLPFKPEVQQQVKEMLYVERRGENRLYAKSGWGMAVDPQVGWYVGFVEKADGQVVAFALNMQMKAGDDIALRKQLSLDVLDKLGVFHYL.

An N-terminal signal peptide occupies residues 1-18 (MKLLKILSLVCLSISIGA). C19 is lipidated: N-palmitoyl cysteine. The S-diacylglycerol cysteine moiety is linked to residue C19. S83 (acyl-ester intermediate) is an active-site residue. Positions 83, 86, 130, 221, 223, and 263 each coordinate a beta-lactam. K86 carries the N6-carboxylysine modification.

It belongs to the class-D beta-lactamase family. As to quaternary structure, monomer. Dimer. Post-translationally, carboxylated on the epsilon-amino group of a lysine, with the resulting carbamate functional group serving as a general base. Probably N-carboxylated at Lys-86 at neutral pH in vivo and undergoes complete N-decarboxylation, at pH 4.1, in vitro. N-carboxylation at Lys-86 probably increases catalytic activity under physiological conditions.

Its subcellular location is the cell membrane. The catalysed reaction is a beta-lactam + H2O = a substituted beta-amino acid. Activated approximately 3-fold by the presence of 0.1M NaHCO3. Class D beta-lactamase which confers resistance to the beta-lactam antibiotics, including penicillins and oxacillin, and moderate resistance to carbapenems such as imipenem; in the DH10B strain of E.coli. Acts via hydrolysis of the beta-lactam ring. Has benzylpenicillin-, oxacillin-, cephalothin- and imipenem-hydrolyzing activities. The protein is Beta-lactamase OXA-58 of Acinetobacter baumannii.